Here is a 406-residue protein sequence, read N- to C-terminus: Cysteine desulfurase (406 aa).

K226 is modified (N6-(pyridoxal phosphate)lysine). C364 serves as the catalytic Cysteine persulfide intermediate.

It belongs to the class-V pyridoxal-phosphate-dependent aminotransferase family. Csd subfamily. In terms of assembly, homodimer. Interacts with SufE and the SufBCD complex composed of SufB, SufC and SufD. The interaction with SufE is required to mediate the direct transfer of the sulfur atom from the S-sulfanylcysteine. It depends on pyridoxal 5'-phosphate as a cofactor.

The protein resides in the cytoplasm. The enzyme catalyses (sulfur carrier)-H + L-cysteine = (sulfur carrier)-SH + L-alanine. The catalysed reaction is L-selenocysteine + AH2 = hydrogenselenide + L-alanine + A + H(+). It functions in the pathway cofactor biosynthesis; iron-sulfur cluster biosynthesis. Cysteine desulfurases mobilize the sulfur from L-cysteine to yield L-alanine, an essential step in sulfur metabolism for biosynthesis of a variety of sulfur-containing biomolecules. Component of the suf operon, which is activated and required under specific conditions such as oxidative stress and iron limitation. Acts as a potent selenocysteine lyase in vitro, that mobilizes selenium from L-selenocysteine. Selenocysteine lyase activity is however unsure in vivo. The polypeptide is Cysteine desulfurase (Shigella sonnei (strain Ss046)).